The following is a 236-amino-acid chain: 2-C-methyl-D-erythritol 4-phosphate cytidylyltransferase (236 aa).

It belongs to the IspD/TarI cytidylyltransferase family. IspD subfamily.

The catalysed reaction is 2-C-methyl-D-erythritol 4-phosphate + CTP + H(+) = 4-CDP-2-C-methyl-D-erythritol + diphosphate. Its pathway is isoprenoid biosynthesis; isopentenyl diphosphate biosynthesis via DXP pathway; isopentenyl diphosphate from 1-deoxy-D-xylulose 5-phosphate: step 2/6. In terms of biological role, catalyzes the formation of 4-diphosphocytidyl-2-C-methyl-D-erythritol from CTP and 2-C-methyl-D-erythritol 4-phosphate (MEP). The polypeptide is 2-C-methyl-D-erythritol 4-phosphate cytidylyltransferase (Pseudomonas syringae pv. syringae (strain B728a)).